The following is a 267-amino-acid chain: Hydroxyethylthiazole kinase 2 (267 aa).

Methionine 41 contacts substrate. Positions 116 and 166 each coordinate ATP. Glycine 193 contacts substrate.

Belongs to the Thz kinase family. The cofactor is Mg(2+).

The catalysed reaction is 5-(2-hydroxyethyl)-4-methylthiazole + ATP = 4-methyl-5-(2-phosphooxyethyl)-thiazole + ADP + H(+). The protein operates within cofactor biosynthesis; thiamine diphosphate biosynthesis; 4-methyl-5-(2-phosphoethyl)-thiazole from 5-(2-hydroxyethyl)-4-methylthiazole: step 1/1. Functionally, catalyzes the phosphorylation of the hydroxyl group of 4-methyl-5-beta-hydroxyethylthiazole (THZ). The polypeptide is Hydroxyethylthiazole kinase 2 (Streptococcus pneumoniae (strain Hungary19A-6)).